Here is a 273-residue protein sequence, read N- to C-terminus: Type II pantothenate kinase (273 aa).

8–15 contacts ATP; that stretch reads DAGGTLTK. The Proton acceptor role is filled by glutamate 76. ATP contacts are provided by residues threonine 105, 127–131, phenylalanine 143, and serine 230; that span reads GGTIM.

The protein belongs to the type II pantothenate kinase family. Homodimer.

Its subcellular location is the cytoplasm. The enzyme catalyses (R)-pantothenate + ATP = (R)-4'-phosphopantothenate + ADP + H(+). It functions in the pathway cofactor biosynthesis; coenzyme A biosynthesis; CoA from (R)-pantothenate: step 1/5. In terms of biological role, catalyzes the phosphorylation of pantothenate (Pan), the first step in CoA biosynthesis. This chain is Type II pantothenate kinase, found in Bacillus cereus (strain ATCC 14579 / DSM 31 / CCUG 7414 / JCM 2152 / NBRC 15305 / NCIMB 9373 / NCTC 2599 / NRRL B-3711).